Consider the following 229-residue polypeptide: Cytochrome c oxidase subunit 2 (229 aa).

The Mitochondrial intermembrane segment spans residues 1-26; sequence MSTWANLGLQDSASPLMEQLIFFHDH. The helical transmembrane segment at 27 to 48 threads the bilayer; that stretch reads ALLILVMITVLVGYLMFMLFFN. The Mitochondrial matrix segment spans residues 49–62; that stretch reads SYVNRFLLHGQLIE. A helical transmembrane segment spans residues 63–82; that stretch reads MIWTILPAIILLFIAMPSLR. Over 83-229 the chain is Mitochondrial intermembrane; the sequence is LLYLLDEINE…IKWISNSVNS (147 aa). Positions 161, 196, 198, 200, 204, and 207 each coordinate Cu cation. E198 serves as a coordination point for Mg(2+).

It belongs to the cytochrome c oxidase subunit 2 family. In terms of assembly, component of the cytochrome c oxidase (complex IV, CIV), a multisubunit enzyme composed of a catalytic core of 3 subunits and several supernumerary subunits. The complex exists as a monomer or a dimer and forms supercomplexes (SCs) in the inner mitochondrial membrane with ubiquinol-cytochrome c oxidoreductase (cytochrome b-c1 complex, complex III, CIII). Requires Cu cation as cofactor.

It localises to the mitochondrion inner membrane. The enzyme catalyses 4 Fe(II)-[cytochrome c] + O2 + 8 H(+)(in) = 4 Fe(III)-[cytochrome c] + 2 H2O + 4 H(+)(out). In terms of biological role, component of the cytochrome c oxidase, the last enzyme in the mitochondrial electron transport chain which drives oxidative phosphorylation. The respiratory chain contains 3 multisubunit complexes succinate dehydrogenase (complex II, CII), ubiquinol-cytochrome c oxidoreductase (cytochrome b-c1 complex, complex III, CIII) and cytochrome c oxidase (complex IV, CIV), that cooperate to transfer electrons derived from NADH and succinate to molecular oxygen, creating an electrochemical gradient over the inner membrane that drives transmembrane transport and the ATP synthase. Cytochrome c oxidase is the component of the respiratory chain that catalyzes the reduction of oxygen to water. Electrons originating from reduced cytochrome c in the intermembrane space (IMS) are transferred via the dinuclear copper A center (CU(A)) of subunit 2 and heme A of subunit 1 to the active site in subunit 1, a binuclear center (BNC) formed by heme A3 and copper B (CU(B)). The BNC reduces molecular oxygen to 2 water molecules using 4 electrons from cytochrome c in the IMS and 4 protons from the mitochondrial matrix. In Drosophila ambigua (Fruit fly), this protein is Cytochrome c oxidase subunit 2 (mt:CoII).